The chain runs to 84 residues: Acyl carrier protein homolog (84 aa).

The Carrier domain occupies 4–79; the sequence is RDILLKIKEI…ELIAEVKHLI (76 aa). The residue at position 39 (Ser39) is an O-(pantetheine 4'-phosphoryl)serine.

In terms of processing, 4'-phosphopantetheine is transferred from CoA to a specific serine of the apo-ACP-like protein.

Its pathway is lipid metabolism; fatty acid biosynthesis. Carrier of the growing fatty acid chain in fatty acid biosynthesis. The sequence is that of Acyl carrier protein homolog from Mycoplasma pneumoniae (strain ATCC 29342 / M129 / Subtype 1) (Mycoplasmoides pneumoniae).